A 496-amino-acid polypeptide reads, in one-letter code: UDP-N-acetylmuramoylalanine--D-glutamate ligase (496 aa).

130–136 provides a ligand contact to ATP; sequence GTNGKTT.

The protein belongs to the MurCDEF family.

Its subcellular location is the cytoplasm. The enzyme catalyses UDP-N-acetyl-alpha-D-muramoyl-L-alanine + D-glutamate + ATP = UDP-N-acetyl-alpha-D-muramoyl-L-alanyl-D-glutamate + ADP + phosphate + H(+). It participates in cell wall biogenesis; peptidoglycan biosynthesis. Cell wall formation. Catalyzes the addition of glutamate to the nucleotide precursor UDP-N-acetylmuramoyl-L-alanine (UMA). In Mycobacterium bovis (strain ATCC BAA-935 / AF2122/97), this protein is UDP-N-acetylmuramoylalanine--D-glutamate ligase.